A 485-amino-acid chain; its full sequence is Neuropeptide F receptor (485 aa).

The Extracellular portion of the chain corresponds to 1-91 (MIISMNQTEP…DSPWYHMLIS (91 aa)). A helical transmembrane segment spans residues 92-112 (MYGVLIVFGALGNTLVVIAVI). The Cytoplasmic segment spans residues 113–122 (RKPIMRTARN). A helical transmembrane segment spans residues 123 to 143 (LFILNLAISDLLLCLVTMPLT). Topologically, residues 144–163 (LMEILSKYWPYGSCSILCKT) are extracellular. A disulfide bridge links Cys-161 with Cys-248. The helical transmembrane segment at 164–184 (IAMLQALCIFVSTISITAIAF) threads the bilayer. The Cytoplasmic portion of the chain corresponds to 185–202 (DRYQVIVYPTRDSLQFVG). A helical membrane pass occupies residues 203-223 (AVTILAGIWALALLLASPLFV). The Extracellular portion of the chain corresponds to 224–262 (YKELINTDTPALLQQIGLQDTIPYCIEDWPSRNGRFYYS). A helical membrane pass occupies residues 263-283 (IFSLCVQYLVPILIVSVAYFG). Residues 284 to 317 (IYNKLKSRITVVAVQASSAQRKVERGRRMKRTNC) lie on the Cytoplasmic side of the membrane. Residues 318 to 338 (LLISIAIIFGVSWLPLNFFNL) traverse the membrane as a helical segment. The Extracellular segment spans residues 339 to 355 (YADMERSPVTQSMLVRY). Residues 356 to 376 (AICHMIGMSSACSNPLLYGWL) form a helical membrane-spanning segment. The Cytoplasmic portion of the chain corresponds to 377-485 (NDNFRKEFQE…PSEVTKLMPR (109 aa)).

This sequence belongs to the G-protein coupled receptor 1 family. In terms of tissue distribution, expressed in midgut, brain lobes and ventral nerve cord of larvae. In adults, expressed in a pair of dorsolateral neurons in the protocerebrum, and the central complex and a small number of neurons in the subesophageal ganglion (at protein level). Expressed in a subset of sugar-responsive PAIN neurons in the thoracic body but is absent from other peripheral PAIN neurons.

The protein localises to the membrane. Functionally, receptor for NPF. Integral part of the sensory system that mediates food signaling, providing the neural basis for the regulation of food response; coordinates larval foraging and social behavior changes during development. Required in dopaminergic (DA) neurons that innervate the mushroom body for satiety to suppress appetitive memory performance; a key factor in the internal state of hunger in the brain. NPF neurons coordinately modulate diverse sensory and motor neurons important for feeding, flight, and locomotion. NPF/NPFR pathway exerts its suppressive effect on larval aversion to diverse stressful stimuli (chemical stress and noxious heat) through attenuation of TRP channel-induced neuronal excitation. NPF neural signaling system plays a physiological role in acute modulation of alcohol sensitivity in adults, rather than a general response to intoxication by sedative agents. Activation and inhibition of the NPF system reduces and enhances ethanol preference, respectively. Sexual experience, the NPF system activity and ethanol consumption are all linked; sexual deprivation is a major contributor to enhanced ethanol preference. This Drosophila melanogaster (Fruit fly) protein is Neuropeptide F receptor.